The chain runs to 1484 residues: Ral GTPase-activating protein subunit beta (1484 aa).

Disordered regions lie at residues 355–437 (PRSD…APRR) and 697–728 (GGEN…PDSE). A Phosphoserine modification is found at Ser359. Phosphothreonine is present on residues Thr363 and Thr379. 3 stretches are compositionally biased toward polar residues: residues 369-381 (SMPQ…TTPP), 392-428 (NKAT…TSSE), and 701-725 (NLKS…PTTP). Residues Ser421 and Ser710 each carry the phosphoserine modification. Phosphothreonine is present on Thr724. A Rap-GAP domain is found at 1138–1382 (IGYLDLLPCR…TTLEKEVPVI (245 aa)). Residue Ser1275 is modified to Phosphoserine. The segment at 1301–1325 (DSLNSSQRLSPSSRMKKLPQGRPVP) is disordered. A compositionally biased stretch (low complexity) spans 1302-1313 (SLNSSQRLSPSS).

Component of the heterodimeric RalGAP1 complex with RALGAPA1 and of the heterodimeric RalGAP2 complex with RALGAPA2. Heterodimerization is required for activity. Detected in brain, thymus, lung, heart, spleen, liver and testis (at protein level).

Its function is as follows. Non-catalytic subunit of the heterodimeric RalGAP1 and RalGAP2 complexes which act as GTPase activators for the Ras-like small GTPases RALA and RALB. The polypeptide is Ral GTPase-activating protein subunit beta (Rattus norvegicus (Rat)).